The chain runs to 85 residues: Small ribosomal subunit protein bS18A (85 aa).

The protein belongs to the bacterial ribosomal protein bS18 family. In terms of assembly, part of the 30S ribosomal subunit. Forms a tight heterodimer with protein bS6.

In terms of biological role, binds as a heterodimer with protein bS6 to the central domain of the 16S rRNA, where it helps stabilize the platform of the 30S subunit. The chain is Small ribosomal subunit protein bS18A from Mycolicibacterium smegmatis (strain ATCC 700084 / mc(2)155) (Mycobacterium smegmatis).